Here is a 528-residue protein sequence, read N- to C-terminus: OLD nuclease (528 aa).

Residues 1 to 153 (MLKRLQVKNF…LAQHLPSIRG (153 aa)) are ATPase domain N-terminus. 31 to 35 (GAGKT) contributes to the ATP binding site. The dimerization domain stretch occupies residues 154–245 (SILGRLLQPV…RESDLTLPGD (92 aa)). The interval 246-369 (ELGLGIQSAI…FDTARNEVLF (124 aa)) is ATPase domain C-terminus. Residues 370-528 (AKRALLVEGY…IRQVTRPMEE (159 aa)) form a toprim domain region. Residues Glu377, Asp381, Asp431, and Asp433 each contribute to the a divalent metal cation site. The tract at residues 440 to 461 (RADEETRRKQEQENKAEQEKNQ) is disordered. A divalent metal cation-binding residues include Ser478 and Glu480. Residue Arg487 is the Stabilizes transition state or protonates leaving group of the active site.

The protein belongs to the class 1 OLD nuclease family. In terms of assembly, homodimer. Mg(2+) serves as cofactor. Mn(2+) is required as a cofactor. Requires Ca(2+) as cofactor.

The catalysed reaction is Exonucleolytic cleavage in the 5'- to 3'-direction to yield nucleoside 5'-phosphates.. An exodeoxyribonuclease that degrades linear or supercoiled dsDNA from 5'-3'. Nicks and linearizes circular DNA. Activity is not stimulated by ATP or AMP-PNP, although it has DNA-stimulated ATPase activity. This chain is OLD nuclease, found in Thermus scotoductus (strain ATCC 700910 / SA-01).